Consider the following 260-residue polypeptide: 5'-nucleotidase SurE (260 aa).

Asp8, Asp9, Ser39, and Asn91 together coordinate a divalent metal cation.

This sequence belongs to the SurE nucleotidase family. The cofactor is a divalent metal cation.

The protein localises to the cytoplasm. It carries out the reaction a ribonucleoside 5'-phosphate + H2O = a ribonucleoside + phosphate. Nucleotidase that shows phosphatase activity on nucleoside 5'-monophosphates. In Acidovorax ebreus (strain TPSY) (Diaphorobacter sp. (strain TPSY)), this protein is 5'-nucleotidase SurE.